A 330-amino-acid polypeptide reads, in one-letter code: Pantothenate kinase (330 aa).

Position 108-115 (108-115) interacts with ATP; sequence GSVAVGKS.

It belongs to the prokaryotic pantothenate kinase family.

The protein localises to the cytoplasm. The enzyme catalyses (R)-pantothenate + ATP = (R)-4'-phosphopantothenate + ADP + H(+). It functions in the pathway cofactor biosynthesis; coenzyme A biosynthesis; CoA from (R)-pantothenate: step 1/5. The chain is Pantothenate kinase from Allorhizobium ampelinum (strain ATCC BAA-846 / DSM 112012 / S4) (Agrobacterium vitis (strain S4)).